A 606-amino-acid polypeptide reads, in one-letter code: Membrane protein insertase YidC (606 aa).

The chain crosses the membrane as a helical span at residues 8-28; it reads LILATALSFIVILVWFVLFPP. The interval 33–59 is disordered; that stretch reads MPLTGETSTELTPDAATGSLPSVTSDT. The next 6 helical transmembrane spans lie at 116–136, 348–368, 374–394, 448–468, 506–526, and 542–562; these read IVTMLSPVGSPGAYYALYGWA, FIDSIDWGWFFFLTKPIFFLL, FIGNMGWAIIGLTLIIKAILL, LPILLQIPIFFSLYKVIFVTI, SIMALIFIGILPLLLGISMWL, and IFAWMPWVFMFMLGGFASGLV.

The protein belongs to the OXA1/ALB3/YidC family. Type 1 subfamily. In terms of assembly, interacts with the Sec translocase complex via SecD. Specifically interacts with transmembrane segments of nascent integral membrane proteins during membrane integration.

The protein resides in the cell inner membrane. Functionally, required for the insertion and/or proper folding and/or complex formation of integral membrane proteins into the membrane. Involved in integration of membrane proteins that insert both dependently and independently of the Sec translocase complex, as well as at least some lipoproteins. Aids folding of multispanning membrane proteins. The sequence is that of Membrane protein insertase YidC from Roseobacter denitrificans (strain ATCC 33942 / OCh 114) (Erythrobacter sp. (strain OCh 114)).